The chain runs to 192 residues: Probable nicotinate-nucleotide adenylyltransferase (192 aa).

Belongs to the NadD family.

The catalysed reaction is nicotinate beta-D-ribonucleotide + ATP + H(+) = deamido-NAD(+) + diphosphate. It participates in cofactor biosynthesis; NAD(+) biosynthesis; deamido-NAD(+) from nicotinate D-ribonucleotide: step 1/1. Catalyzes the reversible adenylation of nicotinate mononucleotide (NaMN) to nicotinic acid adenine dinucleotide (NaAD). The protein is Probable nicotinate-nucleotide adenylyltransferase of Rhizobium etli (strain ATCC 51251 / DSM 11541 / JCM 21823 / NBRC 15573 / CFN 42).